Reading from the N-terminus, the 308-residue chain is MIVTGATDLETAAPALSETARAKVNLTLRVVGRRADGFHDLESVVAFADCVDRLTLTQGAELSLVAAGPRAQECGQTADNLVLTAARLLGERIPDLKAGAFALDKYLPVAAGIGGGSADAAAALRLLARANGLSIDDPRLIETARLTGADVPVCVRSESCVMTGVGESLLPLDVPAMPAVLVNPRVPVATKDVFAALGLRKGQLNVGVNDLIEAIVWPEAGAPVDDWLAMLSDGANDLEAPAIRVQPVIGEVLARLRSTGARLSRMSGSGATCFAIFDDEAAAHHAAQTIRLDRPQWWVHVGTLGGGS.

The active site involves Lys23. 108–118 contributes to the ATP binding site; the sequence is PVAAGIGGGSA. Asp150 is an active-site residue.

Belongs to the GHMP kinase family. IspE subfamily.

It catalyses the reaction 4-CDP-2-C-methyl-D-erythritol + ATP = 4-CDP-2-C-methyl-D-erythritol 2-phosphate + ADP + H(+). It functions in the pathway isoprenoid biosynthesis; isopentenyl diphosphate biosynthesis via DXP pathway; isopentenyl diphosphate from 1-deoxy-D-xylulose 5-phosphate: step 3/6. Its function is as follows. Catalyzes the phosphorylation of the position 2 hydroxy group of 4-diphosphocytidyl-2C-methyl-D-erythritol. The sequence is that of 4-diphosphocytidyl-2-C-methyl-D-erythritol kinase from Nitrobacter winogradskyi (strain ATCC 25391 / DSM 10237 / CIP 104748 / NCIMB 11846 / Nb-255).